The primary structure comprises 420 residues: Acetyl-CoA acetyltransferase, mitochondrial (420 aa).

The N-terminal 26 residues, 1–26 (MTSRALYSTRSQLCRHLAHKYLSRSY), are a transit peptide targeting the mitochondrion. The active-site Acyl-thioester intermediate is cysteine 119. CoA is bound by residues tyrosine 212, 251–253 (KVD), and lysine 256. Position 212 (tyrosine 212) interacts with K(+). 3 residues coordinate K(+): alanine 273, alanine 274, and alanine 276. A CoA-binding site is contributed by serine 277. A K(+)-binding site is contributed by valine 374. Cysteine 406 acts as the Proton donor/acceptor in catalysis.

It belongs to the thiolase-like superfamily. Thiolase family. Homotetramer.

It is found in the mitochondrion. The catalysed reaction is 2 acetyl-CoA = acetoacetyl-CoA + CoA. The enzyme catalyses propanoyl-CoA + acetyl-CoA = 2-methyl-3-oxobutanoyl-CoA + CoA. The protein operates within lipid metabolism; fatty acid beta-oxidation. Its function is as follows. This is one of the enzymes that catalyzes the last step of the mitochondrial beta-oxidation pathway, an aerobic process breaking down fatty acids into acetyl-CoA. Using free coenzyme A/CoA, catalyzes the thiolytic cleavage of medium- to long-chain 3-oxoacyl-CoAs into acetyl-CoA and a fatty acyl-CoA shortened by two carbon atoms. The activity of the enzyme is reversible and it can also catalyze the condensation of two acetyl-CoA molecules into acetoacetyl-CoA. Thereby, it plays a major role in ketone body metabolism. This chain is Acetyl-CoA acetyltransferase, mitochondrial (acat1), found in Danio rerio (Zebrafish).